The primary structure comprises 422 residues: Glucose-1-phosphate adenylyltransferase (422 aa).

Alpha-D-glucose 1-phosphate contacts are provided by residues tyrosine 110, glycine 175, 190-191, and serine 208; that span reads EK.

Belongs to the bacterial/plant glucose-1-phosphate adenylyltransferase family. In terms of assembly, homotetramer.

The catalysed reaction is alpha-D-glucose 1-phosphate + ATP + H(+) = ADP-alpha-D-glucose + diphosphate. The protein operates within glycan biosynthesis; glycogen biosynthesis. In terms of biological role, involved in the biosynthesis of ADP-glucose, a building block required for the elongation reactions to produce glycogen. Catalyzes the reaction between ATP and alpha-D-glucose 1-phosphate (G1P) to produce pyrophosphate and ADP-Glc. In Hydrogenovibrio crunogenus (strain DSM 25203 / XCL-2) (Thiomicrospira crunogena), this protein is Glucose-1-phosphate adenylyltransferase.